The chain runs to 261 residues: Hemin import ATP-binding protein HmuV (261 aa).

In terms of domain architecture, ABC transporter spans Leu-2–Asn-243. Residue Gly-34–Ser-41 coordinates ATP.

Belongs to the ABC transporter superfamily. Heme (hemin) importer (TC 3.A.1.14.5) family. In terms of assembly, the complex is composed of two ATP-binding proteins (HmuV), two transmembrane proteins (HmuU) and a solute-binding protein (HmuT).

The protein localises to the cell inner membrane. Its function is as follows. Part of the ABC transporter complex HmuTUV involved in hemin import. Responsible for energy coupling to the transport system. This chain is Hemin import ATP-binding protein HmuV, found in Pseudoalteromonas translucida (strain TAC 125).